A 143-amino-acid polypeptide reads, in one-letter code: Small ribosomal subunit protein eS19B (143 aa).

The protein belongs to the eukaryotic ribosomal protein eS19 family. Component of the small ribosomal subunit (SSU). Mature yeast ribosomes consist of a small (40S) and a large (60S) subunit. The 40S small subunit contains 1 molecule of ribosomal RNA (18S rRNA) and at least 33 different proteins. The large 60S subunit contains 3 rRNA molecules (25S, 5.8S and 5S rRNA) and at least 46 different proteins.

The protein localises to the cytoplasm. It is found in the nucleus. Its function is as follows. Component of the ribosome, a large ribonucleoprotein complex responsible for the synthesis of proteins in the cell. The small ribosomal subunit (SSU) binds messenger RNAs (mRNAs) and translates the encoded message by selecting cognate aminoacyl-transfer RNA (tRNA) molecules. The large subunit (LSU) contains the ribosomal catalytic site termed the peptidyl transferase center (PTC), which catalyzes the formation of peptide bonds, thereby polymerizing the amino acids delivered by tRNAs into a polypeptide chain. The nascent polypeptides leave the ribosome through a tunnel in the LSU and interact with protein factors that function in enzymatic processing, targeting, and the membrane insertion of nascent chains at the exit of the ribosomal tunnel. eS19 is required for proper maturation of the small (40S) ribosomal subunit. Binds to 40S pre-ribosomal particles, probably required after association of NOC4 but before association of ENP1, TSR1 and RIO2 with 20/21S pre-rRNA. This is Small ribosomal subunit protein eS19B (rps1902) from Schizosaccharomyces pombe (strain 972 / ATCC 24843) (Fission yeast).